A 520-amino-acid polypeptide reads, in one-letter code: Sensory neuron membrane protein 1 (520 aa).

Over 1-5 the chain is Cytoplasmic; sequence MKPKK. A helical transmembrane segment spans residues 6–26; that stretch reads LGIIGGSLLAFGILICAIAFP. The Extracellular portion of the chain corresponds to 27-451; the sequence is PFLRSQVKKQ…KLKTVFKTIS (425 aa). N-linked (GlcNAc...) asparagine glycans are attached at residues Asn-64, Asn-224, and Asn-268. 3 disulfides stabilise this stretch: Cys-264/Cys-329, Cys-293/Cys-348, and Cys-331/Cys-337. The chain crosses the membrane as a helical span at residues 452–472; it reads IVGFMKWFTIVSGTCVSGAAA. Topologically, residues 473 to 520 are cytoplasmic; the sequence is ALFFKNKDKNKLDITKVTPQKGEEKKWPNQMTISTIQSAAVPPNLDAD.

The protein belongs to the CD36 family.

It localises to the cell membrane. Plays an olfactory role that is not restricted to pheromone sensitivity. The polypeptide is Sensory neuron membrane protein 1 (Apis mellifera (Honeybee)).